The primary structure comprises 101 residues: Small ribosomal subunit protein uS14 (101 aa).

The protein belongs to the universal ribosomal protein uS14 family. In terms of assembly, part of the 30S ribosomal subunit. Contacts proteins S3 and S10.

Functionally, binds 16S rRNA, required for the assembly of 30S particles and may also be responsible for determining the conformation of the 16S rRNA at the A site. The sequence is that of Small ribosomal subunit protein uS14 from Nitrosospira multiformis (strain ATCC 25196 / NCIMB 11849 / C 71).